An 877-amino-acid polypeptide reads, in one-letter code: Envelope glycoprotein gp160 (877 aa).

Positions Met1 to Asn19 are cleaved as a signal peptide. Over Thr20–Asn707 the chain is Extracellular. N-linked (GlcNAc...) asparagine; by host glycans are attached at residues Asn36, Asn69, Asn118, Asn135, Asn148, Asn158, Asn173, Asn204, Asn216, Asn258, Asn261, Asn272, Asn282, Asn288, Asn300, Asn312, Asn322, Asn379, Asn420, Asn431, Asn495, and Asn498. 5 disulfides stabilise this stretch: Cys102–Cys224, Cys109–Cys215, Cys114–Cys174, Cys237–Cys267, and Cys247–Cys259. Residues Cys114 to Asn173 form a V1 region. The segment at Cys174–Cys215 is V2. The V3 stretch occupies residues Cys317 to Trp349. Cys317 and Cys350 form a disulfide bridge. 2 cysteine pairs are disulfide-bonded: Cys402/Cys478 and Cys409/Cys451. The V4 stretch occupies residues Cys409–Cys451. A V5 region spans residues Lys494–Leu501. The fusion peptide stretch occupies residues Val544–Ala564. Positions Leu607–Arg623 are immunosuppression. N-linked (GlcNAc...) asparagine; by host glycosylation is found at Asn652 and Asn668. Positions Asn668–Ser692 form a coiled coil. The tract at residues Lys689–Lys710 is MPER; binding to GalCer. A helical transmembrane segment spans residues Ile708–Val728. Residues Tyr729–Asn877 are Cytoplasmic-facing. The short motif at Tyr739–Leu742 is the YXXL motif; contains endocytosis signal element. Residues Trp751–Ser779 are disordered.

As to quaternary structure, the mature envelope protein (Env) consists of a homotrimer of non-covalently associated gp120-gp41 heterodimers. The resulting complex protrudes from the virus surface as a spike. Interacts with host CD4 and CCR5. Gp120 also interacts with the C-type lectins CD209/DC-SIGN and CLEC4M/DC-SIGNR (collectively referred to as DC-SIGN(R)). The mature envelope protein (Env) consists of a homotrimer of non-covalently associated gp120-gp41 heterodimers. The resulting complex protrudes from the virus surface as a spike. Specific enzymatic cleavages in vivo yield mature proteins. Envelope glycoproteins are synthesized as an inactive precursor that is heavily N-glycosylated and processed likely by host cell furin in the Golgi to yield the mature SU and TM proteins. The cleavage site between SU and TM requires the minimal sequence [KR]-X-[KR]-R.

It is found in the virion membrane. It localises to the host cell membrane. Its subcellular location is the host endosome membrane. Functionally, the surface protein gp120 (SU) attaches the virus to the host lymphoid cell by binding to the primary receptor CD4. This interaction induces a structural rearrangement creating a high affinity binding site for a chemokine coreceptor like CCR5. This peculiar 2 stage receptor-interaction strategy allows gp120 to maintain the highly conserved coreceptor-binding site in a cryptic conformation, protected from neutralizing antibodies. These changes are transmitted to the transmembrane protein gp41 and are thought to activate its fusogenic potential by unmasking its fusion peptide. In terms of biological role, surface protein gp120 (SU) may target the virus to gut-associated lymphoid tissue (GALT) by binding host ITGA4/ITGB7 (alpha-4/beta-7 integrins), a complex that mediates T-cell migration to the GALT. Interaction between gp120 and ITGA4/ITGB7 would allow the virus to enter GALT early in the infection, infecting and killing most of GALT's resting CD4+ T-cells. This T-cell depletion is believed to be the major insult to the host immune system leading to AIDS. Its function is as follows. The surface protein gp120 is a ligand for CD209/DC-SIGN and CLEC4M/DC-SIGNR, which are respectively found on dendritic cells (DCs), and on endothelial cells of liver sinusoids and lymph node sinuses. These interactions allow capture of viral particles at mucosal surfaces by these cells and subsequent transmission to permissive cells. DCs are professional antigen presenting cells, critical for host immunity by inducing specific immune responses against a broad variety of pathogens. They act as sentinels in various tissues where they take up antigen, process it, and present it to T-cells following migration to lymphoid organs. SIV subverts the migration properties of dendritic cells to gain access to CD4+ T-cells in lymph nodes. Virus transmission to permissive T-cells occurs either in trans (without DCs infection, through viral capture and transmission), or in cis (following DCs productive infection, through the usual CD4-gp120 interaction), thereby inducing a robust infection. In trans infection, bound virions remain infectious over days and it is proposed that they are not degraded, but protected in non-lysosomal acidic organelles within the DCs close to the cell membrane thus contributing to the viral infectious potential during DCs' migration from the periphery to the lymphoid tissues. On arrival at lymphoid tissues, intact virions recycle back to DCs' cell surface allowing virus transmission to CD4+ T-cells. Virion capture also seems to lead to MHC-II-restricted viral antigen presentation, and probably to the activation of SIV-specific CD4+ cells. The transmembrane protein gp41 (TM) acts as a class I viral fusion protein. Under the current model, the protein has at least 3 conformational states: pre-fusion native state, pre-hairpin intermediate state, and post-fusion hairpin state. During fusion of viral and target intracellular membranes, the coiled coil regions (heptad repeats) assume a trimer-of-hairpins structure, positioning the fusion peptide in close proximity to the C-terminal region of the ectodomain. The formation of this structure appears to drive apposition and subsequent fusion of viral and target cell membranes. Complete fusion occurs in host cell endosomes. The virus undergoes clathrin-dependent internalization long before endosomal fusion, thus minimizing the surface exposure of conserved viral epitopes during fusion and reducing the efficacy of inhibitors targeting these epitopes. Membranes fusion leads to delivery of the nucleocapsid into the cytoplasm. Functionally, the envelope glycoprotein gp160 precursor down-modulates cell surface CD4 antigen by interacting with it in the endoplasmic reticulum and blocking its transport to the cell surface. In terms of biological role, the gp120-gp41 heterodimer allows rapid transcytosis of the virus through CD4 negative cells such as simple epithelial monolayers of the intestinal, rectal and endocervical epithelial barriers. Both gp120 and gp41 specifically recognize glycosphingolipids galactosyl-ceramide (GalCer) or 3' sulfo-galactosyl-ceramide (GalS) present in the lipid rafts structures of epithelial cells. Binding to these alternative receptors allows the rapid transcytosis of the virus through the epithelial cells. This transcytotic vesicle-mediated transport of virions from the apical side to the basolateral side of the epithelial cells does not involve infection of the cells themselves. The chain is Envelope glycoprotein gp160 (env) from Cercopithecidae (Old World monkeys).